The chain runs to 193 residues: DNA dC-&gt;dU-editing enzyme APOBEC-3H (193 aa).

The region spanning 24 to 126 (YRRKTYLCYQ…WKYQQGLRHL (103 aa)) is the CMP/dCMP-type deaminase domain. Residue histidine 54 coordinates Zn(2+). Catalysis depends on glutamate 56, which acts as the Proton donor. Residues cysteine 85 and cysteine 88 each coordinate Zn(2+).

Belongs to the cytidine and deoxycytidylate deaminase family. In terms of assembly, homodimer. Zn(2+) is required as a cofactor. As to expression, expressed in peripheral blood mononuclear cells.

Its subcellular location is the cytoplasm. The enzyme catalyses a 2'-deoxycytidine in single-stranded DNA + H2O + H(+) = a 2'-deoxyuridine in single-stranded DNA + NH4(+). Functionally, DNA deaminase (cytidine deaminase) which acts as an inhibitor of retrovirus replication and retrotransposon mobility via deaminase-dependent and -independent mechanisms. Selectively targets single-stranded DNA and does not deaminate double-stranded DNA or single- or double-stranded RNA. Exhibits single-stranded DNA deaminase activity (in vitro). Incorporates into the released virions of the virion infectivity factor (vif)-deficient feline immunodeficiency virus (FIV) and suppresses FIV infectivity, probably in a deaminase-dependent manner (in vitro). Induces G-to-A hypermutations in vif-deficient FIV (in vitro). The APOBEC3H/APOBEC3Z3 haplotype 5 exhibits antiviral activity against vif-proficient FIV, strains Petaluma, C36 and Shizuoka (in vitro). Does not exhibit inhibitory activity against feline leukemia virus (FeLV), feline endogenous retrovirus (RD-114 virus) or a long interspersed nuclear element-1 (LINE-1) retrotransposon (in vitro). This is DNA dC-&gt;dU-editing enzyme APOBEC-3H from Felis catus (Cat).